The chain runs to 320 residues: Mitochondrial glutamate carrier 2 (320 aa).

Solcar repeat units lie at residues 11–97 (LSIT…LRQL), 105–215 (RNLK…LNQL), and 224–313 (ASFT…GIGE). The next 3 helical transmembrane spans lie at 17 to 37 (LING…IDLA), 66 to 86 (FLGM…EKAI), and 111 to 131 (MLAG…MEML). A Phosphoserine modification is found at Ser-150. Helical transmembrane passes span 190-210 (GLGA…PLFA), 230-250 (FVAG…LDVL), and 293-313 (ALVI…GIGE).

This sequence belongs to the mitochondrial carrier (TC 2.A.29) family.

The protein resides in the mitochondrion inner membrane. The catalysed reaction is L-glutamate(in) + H(+)(in) = L-glutamate(out) + H(+)(out). Its function is as follows. Responsible for the transport of glutamate from the cytosol into the mitochondrial matrix with the concomitant import of a proton (symport system). The chain is Mitochondrial glutamate carrier 2 (Slc25a18) from Rattus norvegicus (Rat).